We begin with the raw amino-acid sequence, 129 residues long: UPF0225 protein XC_4246 (129 aa).

Belongs to the UPF0225 family.

This Xanthomonas campestris pv. campestris (strain 8004) protein is UPF0225 protein XC_4246.